The following is a 690-amino-acid chain: Methionine--tRNA ligase (690 aa).

The 'HIGH' region motif lies at 12-22 (PYANGSIHLGH). Zn(2+)-binding residues include C143, C146, C156, and C159. Positions 328 to 332 (KMSKS) match the 'KMSKS' region motif. K331 serves as a coordination point for ATP. Positions 582 to 690 (DFAKVDLRIA…SGAEPGMKVK (109 aa)) constitute a tRNA-binding domain.

The protein belongs to the class-I aminoacyl-tRNA synthetase family. MetG type 1 subfamily. In terms of assembly, homodimer. Zn(2+) serves as cofactor.

It localises to the cytoplasm. It carries out the reaction tRNA(Met) + L-methionine + ATP = L-methionyl-tRNA(Met) + AMP + diphosphate. Is required not only for elongation of protein synthesis but also for the initiation of all mRNA translation through initiator tRNA(fMet) aminoacylation. The protein is Methionine--tRNA ligase of Thiobacillus denitrificans (strain ATCC 25259 / T1).